Consider the following 543-residue polypeptide: Protein MGF 505-10R (543 aa).

The protein belongs to the asfivirus MGF 505 family.

Its function is as follows. Plays a role in virus cell tropism, and may be required for efficient virus replication in macrophages. This chain is Protein MGF 505-10R, found in African swine fever virus (isolate Tick/South Africa/Pretoriuskop Pr4/1996) (ASFV).